The following is a 155-amino-acid chain: Snaclec clone 2100755 (155 aa).

The first 23 residues, 1–23, serve as a signal peptide directing secretion; sequence MGRFIFVSFGLLVVFLSLSGTAA. 3 cysteine pairs are disulfide-bonded: Cys25-Cys36, Cys53-Cys144, and Cys119-Cys136. The C-type lectin domain occupies 32–145; sequence YDGHCYQVFS…CEKSVSFVCK (114 aa).

This sequence belongs to the snaclec family. In terms of assembly, heterodimer; disulfide-linked.

It is found in the secreted. In terms of biological role, interferes with one step of hemostasis (modulation of platelet aggregation, or coagulation cascade, for example). The sequence is that of Snaclec clone 2100755 from Deinagkistrodon acutus (Hundred-pace snake).